A 493-amino-acid chain; its full sequence is GTPase Der (493 aa).

The EngA-type G 1 domain maps to 3–166 (PVIALVGRPN…EALGIFPKDN (164 aa)). GTP is bound by residues 9-16 (GRPNVGKS), 56-60 (DTGGI), and 118-121 (NKVD). Residues 167 to 184 (VEEEGEGEPASEEVAEGE) are compositionally biased toward acidic residues. A disordered region spans residues 167 to 195 (VEEEGEGEPASEEVAEGEEPTRIPGPSEK). Residues 198–371 (IKIAIIGRPN…SVQESFRSAV (174 aa)) form the EngA-type G 2 domain. Residues 204-211 (GRPNVGKS), 251-255 (DTAGV), and 316-319 (NKWD) contribute to the GTP site. The region spanning 372–456 (TRWPTSRLTS…PIRIEYKGGE (85 aa)) is the KH-like domain. Basic and acidic residues predominate over residues 454–463 (GGENPYEGKK). Residues 454–493 (GGENPYEGKKNSLTARQVNKKRRLMSHHKKAEKKKKDKRR) are disordered. A compositionally biased stretch (basic residues) spans 471-493 (VNKKRRLMSHHKKAEKKKKDKRR).

Belongs to the TRAFAC class TrmE-Era-EngA-EngB-Septin-like GTPase superfamily. EngA (Der) GTPase family. Associates with the 50S ribosomal subunit.

In terms of biological role, GTPase that plays an essential role in the late steps of ribosome biogenesis. This Pseudomonas aeruginosa (strain LESB58) protein is GTPase Der.